The chain runs to 316 residues: Methionyl-tRNA formyltransferase (316 aa).

109-112 (SLLP) is a (6S)-5,6,7,8-tetrahydrofolate binding site.

This sequence belongs to the Fmt family.

The enzyme catalyses L-methionyl-tRNA(fMet) + (6R)-10-formyltetrahydrofolate = N-formyl-L-methionyl-tRNA(fMet) + (6S)-5,6,7,8-tetrahydrofolate + H(+). Attaches a formyl group to the free amino group of methionyl-tRNA(fMet). The formyl group appears to play a dual role in the initiator identity of N-formylmethionyl-tRNA by promoting its recognition by IF2 and preventing the misappropriation of this tRNA by the elongation apparatus. The chain is Methionyl-tRNA formyltransferase from Nitrosomonas eutropha (strain DSM 101675 / C91 / Nm57).